The sequence spans 255 residues: Proteasome subunit alpha type-3 (255 aa).

Serine 2 is subject to N-acetylserine. N6-acetyllysine is present on residues lysine 57, lysine 206, and lysine 230. Serine 243 and serine 250 each carry phosphoserine.

The protein belongs to the peptidase T1A family. As to quaternary structure, the 26S proteasome consists of a 20S proteasome core and two 19S regulatory subunits. The 20S proteasome core is a barrel-shaped complex made of 28 subunits that are arranged in four stacked rings. The two outer rings are each formed by seven alpha subunits, and the two inner rings are formed by seven beta subunits. The proteolytic activity is exerted by three beta-subunits PSMB5, PSMB6 and PSMB7. Interacts with AURKB. Interacts with CDKN1A. Interacts with MDM2 and RB1. Interacts with the C-terminus of TBXA2R isoform 2. Interacts with DNAJB2.

It is found in the cytoplasm. It localises to the nucleus. Functionally, component of the 20S core proteasome complex involved in the proteolytic degradation of most intracellular proteins. This complex plays numerous essential roles within the cell by associating with different regulatory particles. Associated with two 19S regulatory particles, forms the 26S proteasome and thus participates in the ATP-dependent degradation of ubiquitinated proteins. The 26S proteasome plays a key role in the maintenance of protein homeostasis by removing misfolded or damaged proteins that could impair cellular functions, and by removing proteins whose functions are no longer required. Associated with the PA200 or PA28, the 20S proteasome mediates ubiquitin-independent protein degradation. This type of proteolysis is required in several pathways including spermatogenesis (20S-PA200 complex) or generation of a subset of MHC class I-presented antigenic peptides (20S-PA28 complex). Binds to the C-terminus of CDKN1A and thereby mediates its degradation. Negatively regulates the membrane trafficking of the cell-surface thromboxane A2 receptor (TBXA2R) isoform 2. This chain is Proteasome subunit alpha type-3 (PSMA3), found in Bos taurus (Bovine).